The chain runs to 370 residues: Anhydro-N-acetylmuramic acid kinase (370 aa).

13 to 20 (GTSMDGVD) contacts ATP.

Belongs to the anhydro-N-acetylmuramic acid kinase family.

It carries out the reaction 1,6-anhydro-N-acetyl-beta-muramate + ATP + H2O = N-acetyl-D-muramate 6-phosphate + ADP + H(+). Its pathway is amino-sugar metabolism; 1,6-anhydro-N-acetylmuramate degradation. The protein operates within cell wall biogenesis; peptidoglycan recycling. In terms of biological role, catalyzes the specific phosphorylation of 1,6-anhydro-N-acetylmuramic acid (anhMurNAc) with the simultaneous cleavage of the 1,6-anhydro ring, generating MurNAc-6-P. Is required for the utilization of anhMurNAc either imported from the medium or derived from its own cell wall murein, and thus plays a role in cell wall recycling. This chain is Anhydro-N-acetylmuramic acid kinase, found in Shewanella frigidimarina (strain NCIMB 400).